The following is a 409-amino-acid chain: Argininosuccinate synthase (409 aa).

Residues 10-18 (AYSGGLDTS) and Ala-37 contribute to the ATP site. 2 residues coordinate L-citrulline: Tyr-90 and Ser-95. Gly-120 is an ATP binding site. The L-aspartate site is built by Thr-122, Asn-126, and Asp-127. L-citrulline is bound at residue Asn-126. L-citrulline-binding residues include Arg-130, Ser-182, Ser-191, Glu-267, and Tyr-279.

Belongs to the argininosuccinate synthase family. Type 1 subfamily. Homotetramer.

It is found in the cytoplasm. The enzyme catalyses L-citrulline + L-aspartate + ATP = 2-(N(omega)-L-arginino)succinate + AMP + diphosphate + H(+). Its pathway is amino-acid biosynthesis; L-arginine biosynthesis; L-arginine from L-ornithine and carbamoyl phosphate: step 2/3. In Azoarcus sp. (strain BH72), this protein is Argininosuccinate synthase.